We begin with the raw amino-acid sequence, 151 residues long: uncharacterized protein (151 aa).

The interval M1–A48 is disordered.

This is an uncharacterized protein from Homo sapiens (Human).